The primary structure comprises 1413 residues: Zinc finger protein 609 (1413 aa).

5 disordered regions span residues 1–26 (MSLSSGACGGKGVDANPVETYDSGDE), 47–196 (QKLE…GRGS), 354–484 (RFCD…EPTL), 517–659 (AHAH…RPIA), and 695–765 (PNSP…AAGD). Residues Ser358, Ser361, and Ser379 each carry the phosphoserine modification. The residue at position 381 (Thr381) is a Phosphothreonine. The segment covering 386–405 (AAAASDSKGTSSSSKTRAGA) has biased composition (low complexity). 6 positions are modified to phosphoserine: Ser413, Ser433, Ser446, Ser452, Ser467, and Ser470. A compositionally biased stretch (polar residues) spans 423–437 (ASSTSEDVKASPSSA). Lys479 participates in a covalent cross-link: Glycyl lysine isopeptide (Lys-Gly) (interchain with G-Cter in SUMO2). The segment at 495-520 (IDCPHPNCNKKYKHINGLKYHQAHAH) adopts a C2H2-type zinc-finger fold. The segment covering 519-529 (AHTDDDSKPEA) has biased composition (basic and acidic residues). Phosphoserine occurs at positions 533, 575, and 577. Positions 625–648 (SLERKCMEKEKCKKPSSLKSEKIP) are enriched in basic and acidic residues. Residues 725 to 735 (DKKKKDKKKKD) show a composition bias toward basic residues. A Phosphoserine modification is found at Ser742. At Thr745 the chain carries Phosphothreonine. Residues 750–763 (CRAEEGKSPFRDAA) show a composition bias toward basic and acidic residues. A Phosphoserine modification is found at Ser757. A Glycyl lysine isopeptide (Lys-Gly) (interchain with G-Cter in SUMO2) cross-link involves residue Lys788. Positions 797-843 (FTDNAPSPSIGGSSRLDSTTPTQPLTPLHVVTQNGAEASSVKTNSPA) are enriched in polar residues. 4 disordered regions span residues 797-962 (FTDN…VIQQ), 1004-1127 (YEEQ…RQAE), 1154-1221 (IKSE…SPLT), and 1273-1369 (SKVS…STHH). A Phosphoserine modification is found at Ser803. The residue at position 822 (Thr822) is a Phosphothreonine. A phosphoserine mark is found at Ser841, Ser845, and Ser848. Basic and acidic residues predominate over residues 854–875 (GEGKVDSAKSKDPEQLVKEGAK). Polar residues predominate over residues 902-916 (YAQSSPGTLTSSSQA). A compositionally biased stretch (basic and acidic residues) spans 925-949 (TKKDEEPESVEGKVKNDVCEEKKPE). Residues 950–962 (LSNSSQQPSVIQQ) are compositionally biased toward polar residues. The span at 1022–1044 (GLDKKTEMGLKEREASLKEEWKQ) shows a compositional bias: basic and acidic residues. Ser1057 carries the post-translational modification Phosphoserine. A Glycyl lysine isopeptide (Lys-Gly) (interchain with G-Cter in SUMO2) cross-link involves residue Lys1063. Composition is skewed to basic and acidic residues over residues 1099–1115 (LKGKLGEASHLGKEASE), 1154–1189 (IKSEDDRWKEERDRKLKEDRSRSKDSVPKEDGKEST), and 1197–1210 (PSEESRLGSKEPRP). A Glycyl lysine isopeptide (Lys-Gly) (interchain with G-Cter in SUMO2) cross-link involves residue Lys1155. Polar residues predominate over residues 1288 to 1298 (PSVSCKASSES). Residue Lys1299 forms a Glycyl lysine isopeptide (Lys-Gly) (interchain with G-Cter in SUMO2) linkage. Gly residues predominate over residues 1330–1348 (GCGVVGGGGSCGSVAGAGG).

As to quaternary structure, interacts (via N-terminus) with NIPBL. Interacts with the multiprotein complex Integrator. In terms of tissue distribution, expressed in myoblasts. Expressed in neurons in various brain regions, including striatum, prefrontal cortex, olfactory bulb, midbrain, cerebellum and hippocampus. Expressed in neural stem cells (at protein level). Expressed in thymocytes.

Its subcellular location is the nucleus. Its function is as follows. Transcription factor, which activates RAG1, and possibly RAG2, transcription. Through the regulation of RAG1/2 expression, may regulate thymocyte maturation. Along with NIPBL and the multiprotein complex Integrator, promotes cortical neuron migration during brain development by regulating the transcription of crucial genes in this process. Preferentially binds promoters containing paused RNA polymerase II. Up-regulates the expression of SEMA3A, NRP1, PLXND1 and GABBR2 genes, among others. In terms of biological role, involved in regulation of myoblast proliferation during myogenesis. The polypeptide is Zinc finger protein 609 (Znf609) (Mus musculus (Mouse)).